The following is a 515-amino-acid chain: Maturase K (515 aa).

It belongs to the intron maturase 2 family. MatK subfamily.

The protein localises to the plastid. It is found in the chloroplast. Usually encoded in the trnK tRNA gene intron. Probably assists in splicing its own and other chloroplast group II introns. The polypeptide is Maturase K (Zingiber mioga (Myoga ginger)).